Here is a 165-residue protein sequence, read N- to C-terminus: Ubiquitin-fold modifier-conjugating enzyme 1 (165 aa).

The active-site Glycyl thioester intermediate is the Cys117.

This sequence belongs to the ubiquitin-conjugating enzyme family. UFC1 subfamily.

Its function is as follows. E2-like enzyme which forms an intermediate with UFM1 via a thioester linkage. The sequence is that of Ubiquitin-fold modifier-conjugating enzyme 1 from Brugia malayi (Filarial nematode worm).